Reading from the N-terminus, the 309-residue chain is Succinate dehydrogenase [ubiquinone] iron-sulfur subunit 3, mitochondrial (309 aa).

Residues 1-22 constitute a mitochondrion transit peptide; the sequence is MSSVLRLLGRRICNPAAEKVRL. The 92-residue stretch at 69–160 folds into the 2Fe-2S ferredoxin-type domain; it reads FKIYRWNPDK…PTIITPLPHM (92 aa). Cys-120, Cys-125, and Cys-140 together coordinate [2Fe-2S] cluster. The region spanning 202-232 is the 4Fe-4S ferredoxin-type domain; that stretch reads DRKKLDGLYECILCACCTTSCPSYWWNPEEF. [4Fe-4S] cluster is bound by residues Cys-212, Cys-215, and Cys-218. Cys-222 serves as a coordination point for [3Fe-4S] cluster. Position 227 (Trp-227) interacts with a ubiquinone. Cys-270 and Cys-276 together coordinate [3Fe-4S] cluster. Cys-280 is a [4Fe-4S] cluster binding site.

It belongs to the succinate dehydrogenase/fumarate reductase iron-sulfur protein family. In terms of assembly, component of complex II composed of eight subunits in plants: four classical SDH subunits SDH1, SDH2, SDH3 and SDH4 (a flavoprotein (FP), an iron-sulfur protein (IP), and a cytochrome b composed of a large and a small subunit.), as well as four subunits unknown in mitochondria from bacteria and heterotrophic eukaryotes. The cofactor is [2Fe-2S] cluster. Requires [3Fe-4S] cluster as cofactor. [4Fe-4S] cluster serves as cofactor.

The protein localises to the mitochondrion inner membrane. It carries out the reaction a quinone + succinate = fumarate + a quinol. The protein operates within carbohydrate metabolism; tricarboxylic acid cycle; fumarate from succinate (eukaryal route): step 1/1. In terms of biological role, iron-sulfur protein (IP) subunit of succinate dehydrogenase (SDH) that is involved in complex II of the mitochondrial electron transport chain and is responsible for transferring electrons from succinate to ubiquinone (coenzyme Q). The sequence is that of Succinate dehydrogenase [ubiquinone] iron-sulfur subunit 3, mitochondrial (SDH2-3) from Arabidopsis thaliana (Mouse-ear cress).